The primary structure comprises 601 residues: Beta-phellandrene synthase (601 aa).

A chloroplast-targeting transit peptide spans 1–35 (MSTISIHHVGILRNPLPSKNKRALINNPWSLSLPR). Residues Asp356 and Asp360 each coordinate Mn(2+). A DDXXD motif motif is present at residues 356–360 (DDVYD). Homodimerization stretches follow at residues 362 to 368 (YGTLDEL) and 434 to 471 (EAEW…LSIP). Asp499 and Glu507 together coordinate Mn(2+).

Belongs to the terpene synthase family. As to quaternary structure, homodimer. The cofactor is Mn(2+). Requires Mg(2+) as cofactor. As to expression, expressed in peltate glandular trichomes. Present at low levels in flowers and stems.

The protein localises to the plastid. It localises to the chloroplast. It catalyses the reaction (2E)-geranyl diphosphate = beta-phellandrene + diphosphate. The enzyme catalyses (2E)-geranyl diphosphate = (1R,5R)-sabinene + diphosphate. Its pathway is secondary metabolite biosynthesis; terpenoid biosynthesis. Functionally, involved in the biosynthesis of phenolic monoterpenes natural products. Monoterpene synthase that catalyzes mainly the formation of olefins such as sabinene and beta-phellandrene, and minor amounts of other monoterpenes (e.g. myrcene, gamma-terpinene, alpha-thujene and alpha-pinene) from geranyl diphosphate (GPP). This chain is Beta-phellandrene synthase, found in Origanum vulgare (Wild marjoram).